Reading from the N-terminus, the 274-residue chain is Dermonecrotic toxin SaSicTox-betaIIB1 (274 aa).

His-5 is an active-site residue. Residues Glu-25 and Asp-27 each contribute to the Mg(2+) site. His-41 serves as the catalytic Nucleophile. Cystine bridges form between Cys-45–Cys-51 and Cys-47–Cys-190. Asp-85 contacts Mg(2+).

The protein belongs to the arthropod phospholipase D family. Class II subfamily. Mg(2+) serves as cofactor. As to expression, expressed by the venom gland.

It is found in the secreted. It carries out the reaction an N-(acyl)-sphingosylphosphocholine = an N-(acyl)-sphingosyl-1,3-cyclic phosphate + choline. The catalysed reaction is an N-(acyl)-sphingosylphosphoethanolamine = an N-(acyl)-sphingosyl-1,3-cyclic phosphate + ethanolamine. The enzyme catalyses a 1-acyl-sn-glycero-3-phosphocholine = a 1-acyl-sn-glycero-2,3-cyclic phosphate + choline. It catalyses the reaction a 1-acyl-sn-glycero-3-phosphoethanolamine = a 1-acyl-sn-glycero-2,3-cyclic phosphate + ethanolamine. Its function is as follows. Dermonecrotic toxins cleave the phosphodiester linkage between the phosphate and headgroup of certain phospholipids (sphingolipid and lysolipid substrates), forming an alcohol (often choline) and a cyclic phosphate. This toxin acts on sphingomyelin (SM). It may also act on ceramide phosphoethanolamine (CPE), lysophosphatidylcholine (LPC) and lysophosphatidylethanolamine (LPE), but not on lysophosphatidylserine (LPS), and lysophosphatidylglycerol (LPG). It acts by transphosphatidylation, releasing exclusively cyclic phosphate products as second products. Induces dermonecrosis, hemolysis, increased vascular permeability, edema, inflammatory response, and platelet aggregation. This is Dermonecrotic toxin SaSicTox-betaIIB1 from Sicarius albospinosus (Six-eyed crab spider).